Consider the following 82-residue polypeptide: Putative membrane protein insertion efficiency factor (82 aa).

It belongs to the UPF0161 family.

It localises to the cell inner membrane. Its function is as follows. Could be involved in insertion of integral membrane proteins into the membrane. The polypeptide is Putative membrane protein insertion efficiency factor (Colwellia psychrerythraea (strain 34H / ATCC BAA-681) (Vibrio psychroerythus)).